Reading from the N-terminus, the 366-residue chain is Ribosomal RNA large subunit methyltransferase M (366 aa).

Residues S188, C221–G224, D240, D260, and D277 each bind S-adenosyl-L-methionine. The Proton acceptor role is filled by K306.

Belongs to the class I-like SAM-binding methyltransferase superfamily. RNA methyltransferase RlmE family. RlmM subfamily. As to quaternary structure, monomer.

The protein resides in the cytoplasm. The catalysed reaction is cytidine(2498) in 23S rRNA + S-adenosyl-L-methionine = 2'-O-methylcytidine(2498) in 23S rRNA + S-adenosyl-L-homocysteine + H(+). Functionally, catalyzes the 2'-O-methylation at nucleotide C2498 in 23S rRNA. This is Ribosomal RNA large subunit methyltransferase M from Photorhabdus asymbiotica subsp. asymbiotica (strain ATCC 43949 / 3105-77) (Xenorhabdus luminescens (strain 2)).